The sequence spans 299 residues: uncharacterized protein (299 aa).

A disordered region spans residues 1–44 (MSDSNLTNPIKAFFHDEFPEQYQEPPGLQKNMKPVPDCGEKSYK). 55 to 79 (LVTGGDSGIGRAAAIAYAREGADVA) contributes to the NADP(+) binding site. Serine 188 serves as a coordination point for substrate. Tyrosine 201 serves as the catalytic Proton acceptor.

This sequence belongs to the short-chain dehydrogenases/reductases (SDR) family.

This is an uncharacterized protein from Bacillus subtilis (strain 168).